Reading from the N-terminus, the 426-residue chain is Glutamate-1-semialdehyde 2,1-aminomutase (426 aa).

An N6-(pyridoxal phosphate)lysine modification is found at Lys265.

This sequence belongs to the class-III pyridoxal-phosphate-dependent aminotransferase family. HemL subfamily. In terms of assembly, homodimer. The cofactor is pyridoxal 5'-phosphate.

Its subcellular location is the cytoplasm. It carries out the reaction (S)-4-amino-5-oxopentanoate = 5-aminolevulinate. Its pathway is porphyrin-containing compound metabolism; protoporphyrin-IX biosynthesis; 5-aminolevulinate from L-glutamyl-tRNA(Glu): step 2/2. The polypeptide is Glutamate-1-semialdehyde 2,1-aminomutase (Escherichia coli O157:H7).